We begin with the raw amino-acid sequence, 602 residues long: Proteasome-associated ATPase (602 aa).

Residues 1–13 are compositionally biased toward basic and acidic residues; the sequence is MQHDLPGGRHDEA. The segment at 1–33 is disordered; it reads MQHDLPGGRHDEADSSETGGAGTTENPSSEQAR. Residues 23 to 32 show a composition bias toward polar residues; it reads TTENPSSEQA. Positions 28-103 form a coiled coil; it reads SSEQARQIRF…LREEVDRLAQ (76 aa). 291-296 is a binding site for ATP; that stretch reads GCGKTL. The interval 601 to 602 is docks into pockets in the proteasome alpha-ring; sequence YL.

This sequence belongs to the AAA ATPase family. As to quaternary structure, homohexamer. Assembles into a hexameric ring structure that caps the 20S proteasome core. Strongly interacts with the prokaryotic ubiquitin-like protein Pup through a hydrophobic interface; the interacting region of ARC lies in its N-terminal coiled-coil domain. There is one Pup binding site per ARC hexamer ring. Upon ATP-binding, the C-terminus of ARC interacts with the alpha-rings of the proteasome core, possibly by binding to the intersubunit pockets.

It functions in the pathway protein degradation; proteasomal Pup-dependent pathway. Functionally, ATPase which is responsible for recognizing, binding, unfolding and translocation of pupylated proteins into the bacterial 20S proteasome core particle. May be essential for opening the gate of the 20S proteasome via an interaction with its C-terminus, thereby allowing substrate entry and access to the site of proteolysis. Thus, the C-termini of the proteasomal ATPase may function like a 'key in a lock' to induce gate opening and therefore regulate proteolysis. In Saccharomonospora viridis (strain ATCC 15386 / DSM 43017 / JCM 3036 / CCUG 5913 / NBRC 12207 / NCIMB 9602 / P101) (Thermoactinomyces viridis), this protein is Proteasome-associated ATPase.